Consider the following 500-residue polypeptide: Protein DETOXIFICATION 24 (500 aa).

Residues 1-20 are disordered; the sequence is MSTQEEMEERLLREGSDAEG. A run of 12 helical transmembrane segments spans residues 48–67, 72–92, 124–144, 160–180, 188–208, 225–245, 266–286, 298–318, 342–362, 384–404, 411–431, and 441–461; these read SSLF…AFIG, LGLA…YGLM, IVDM…GPIL, IYPW…IQMY, AIVG…TWWC, VGSW…WCPF, ISSG…VLMA, AFSI…GFLG, VILT…LAFC, VILA…GVAV, IVAV…GLIL, and GLWS…CYII.

The protein belongs to the multi antimicrobial extrusion (MATE) (TC 2.A.66.1) family.

The protein localises to the membrane. This is Protein DETOXIFICATION 24 from Arabidopsis thaliana (Mouse-ear cress).